The chain runs to 202 residues: Na(+)-translocating NADH-quinone reductase subunit E (202 aa).

The next 6 helical transmembrane spans lie at Ala11–Ile31, Val35–Ala55, Leu79–Glu99, Gly114–Val134, Val144–Ile164, and Leu180–Val200.

Belongs to the NqrDE/RnfAE family. Composed of six subunits; NqrA, NqrB, NqrC, NqrD, NqrE and NqrF.

It localises to the cell inner membrane. The catalysed reaction is a ubiquinone + n Na(+)(in) + NADH + H(+) = a ubiquinol + n Na(+)(out) + NAD(+). In terms of biological role, NQR complex catalyzes the reduction of ubiquinone-1 to ubiquinol by two successive reactions, coupled with the transport of Na(+) ions from the cytoplasm to the periplasm. NqrA to NqrE are probably involved in the second step, the conversion of ubisemiquinone to ubiquinol. The polypeptide is Na(+)-translocating NADH-quinone reductase subunit E (Stutzerimonas stutzeri (strain A1501) (Pseudomonas stutzeri)).